The chain runs to 295 residues: Ribosomal protein L11 methyltransferase (295 aa).

Residues threonine 146, glycine 167, aspartate 189, and asparagine 231 each coordinate S-adenosyl-L-methionine.

Belongs to the methyltransferase superfamily. PrmA family.

Its subcellular location is the cytoplasm. It catalyses the reaction L-lysyl-[protein] + 3 S-adenosyl-L-methionine = N(6),N(6),N(6)-trimethyl-L-lysyl-[protein] + 3 S-adenosyl-L-homocysteine + 3 H(+). Methylates ribosomal protein L11. In Vibrio parahaemolyticus serotype O3:K6 (strain RIMD 2210633), this protein is Ribosomal protein L11 methyltransferase.